A 154-amino-acid chain; its full sequence is Putative pre-16S rRNA nuclease (154 aa).

The protein belongs to the YqgF nuclease family.

It is found in the cytoplasm. Functionally, could be a nuclease involved in processing of the 5'-end of pre-16S rRNA. The protein is Putative pre-16S rRNA nuclease of Rickettsia peacockii (strain Rustic).